The primary structure comprises 84 residues: Tetrahydromethanopterin S-methyltransferase subunit G (84 aa).

Residues 50–70 (IGILYGLVIGIILSYILPALI) form a helical membrane-spanning segment.

The protein belongs to the MtrG family. As to quaternary structure, the complex is composed of 8 subunits; MtrA, MtrB, MtrC, MtrD, MtrE, MtrF, MtrG and MtrH.

It is found in the cell membrane. The enzyme catalyses 5-methyl-5,6,7,8-tetrahydromethanopterin + coenzyme M + 2 Na(+)(in) = 5,6,7,8-tetrahydromethanopterin + methyl-coenzyme M + 2 Na(+)(out). It participates in one-carbon metabolism; methanogenesis from CO(2); methyl-coenzyme M from 5,10-methylene-5,6,7,8-tetrahydromethanopterin: step 2/2. Its function is as follows. Part of a complex that catalyzes the formation of methyl-coenzyme M and tetrahydromethanopterin from coenzyme M and methyl-tetrahydromethanopterin. This is an energy-conserving, sodium-ion translocating step. This Methanocaldococcus jannaschii (strain ATCC 43067 / DSM 2661 / JAL-1 / JCM 10045 / NBRC 100440) (Methanococcus jannaschii) protein is Tetrahydromethanopterin S-methyltransferase subunit G.